The primary structure comprises 200 residues: MTDVALIDAGGANLGSVRYALERLGVEARVVRDAAGLQGAQRVILPGVGAAPEVMSRLRAQGLVAPLRELQVPLIGICLGMQLLFEHSEEGDVECLGLLPGIVRHMTPALGIRVPHMGWNRLVPMRESALLAGLPERASAYFVHGYAAPVTADTVAACDHGGLFTAIVQNGLRCGAQFHPERSADTGARILHNFLEMSFP.

The region spanning 3–200 (DVALIDAGGA…LHNFLEMSFP (198 aa)) is the Glutamine amidotransferase type-1 domain. Catalysis depends on Cys-78, which acts as the Nucleophile. Active-site residues include His-179 and Glu-181.

In terms of assembly, heterodimer of HisH and HisF.

The protein resides in the cytoplasm. The enzyme catalyses 5-[(5-phospho-1-deoxy-D-ribulos-1-ylimino)methylamino]-1-(5-phospho-beta-D-ribosyl)imidazole-4-carboxamide + L-glutamine = D-erythro-1-(imidazol-4-yl)glycerol 3-phosphate + 5-amino-1-(5-phospho-beta-D-ribosyl)imidazole-4-carboxamide + L-glutamate + H(+). It carries out the reaction L-glutamine + H2O = L-glutamate + NH4(+). The protein operates within amino-acid biosynthesis; L-histidine biosynthesis; L-histidine from 5-phospho-alpha-D-ribose 1-diphosphate: step 5/9. IGPS catalyzes the conversion of PRFAR and glutamine to IGP, AICAR and glutamate. The HisH subunit catalyzes the hydrolysis of glutamine to glutamate and ammonia as part of the synthesis of IGP and AICAR. The resulting ammonia molecule is channeled to the active site of HisF. The polypeptide is Imidazole glycerol phosphate synthase subunit HisH (Xanthomonas oryzae pv. oryzae (strain MAFF 311018)).